A 235-amino-acid polypeptide reads, in one-letter code: Mitochondrial inner membrane protease ATP23 homolog (235 aa).

Histidine 114 provides a ligand contact to a divalent metal cation. Glutamate 115 is a catalytic residue. Histidine 118 contacts a divalent metal cation.

Belongs to the peptidase M76 family.

The protein is Mitochondrial inner membrane protease ATP23 homolog (atp23) of Xenopus laevis (African clawed frog).